Here is a 454-residue protein sequence, read N- to C-terminus: Inner membrane permease YgbN (454 aa).

Position 1 (Met1) is a topological domain, periplasmic. A helical membrane pass occupies residues 2 to 22 (STITLLCIALAGVIMLLLLVI). Over 23 to 27 (KAKVQ) the chain is Cytoplasmic. A helical transmembrane segment spans residues 28–48 (PFVALLLVSLLVALAAGIPAG). At 49–52 (EVGK) the chain is on the periplasmic side. The chain crosses the membrane as a helical span at residues 53–73 (VMIAGMGGVLGSVTIIIGLGA). Residues 74 to 108 (MLGRMIEHSGGAESLANYFSRKLGDKRTIAALTLA) lie on the Cytoplasmic side of the membrane. Residues 109-129 (AFFLGIPVFFDVGFIILAPII) form a helical membrane-spanning segment. The Periplasmic segment spans residues 130 to 137 (YGFAKVAK). The chain crosses the membrane as a helical span at residues 138–158 (ISPLKFGLPVAGIMLTVHVAV). The Cytoplasmic portion of the chain corresponds to 159 to 174 (PPHPGPVAAAGLLHAD). Residues 175-195 (IGWLTIIGIAISIPVGVVGYF) traverse the membrane as a helical segment. Residues 196-235 (AAKIINKRQYAMSVEVLEQMQLAPASEEGATKLSDKINPP) lie on the Periplasmic side of the membrane. Residues 236–256 (GVALVTSLIVIPIAIIMAGTV) traverse the membrane as a helical segment. At 257-273 (SATLMPPSHPLLGTLQL) the chain is on the cytoplasmic side. The chain crosses the membrane as a helical span at residues 274 to 294 (IGSPMVALMIALVLAFWLLAL). Residues 295–305 (RRGWSLQHTSD) lie on the Periplasmic side of the membrane. A helical transmembrane segment spans residues 306-326 (IMGSALPTAAVVILVTGAGGV). The Cytoplasmic portion of the chain corresponds to 327–341 (FGKVLVESGVGKALA). A helical membrane pass occupies residues 342 to 362 (NMLQMIDLPLLPAAFIISLAL). Topologically, residues 363-383 (RASQGSATVAILTTGGLLSEA) are periplasmic. Residues 384 to 404 (VMGLNPIQCVLVTLAACFGGL) form a helical membrane-spanning segment. The Cytoplasmic portion of the chain corresponds to 405-433 (GASHINDSGFWIVTKYLGLSVADGLKTWT). Residues 434-454 (VLTTILGFTGFLITWCVWAVI) form a helical membrane-spanning segment.

It belongs to the GntP permease family.

The protein resides in the cell inner membrane. This chain is Inner membrane permease YgbN (ygbN), found in Escherichia coli (strain K12).